Here is a 230-residue protein sequence, read N- to C-terminus: Uracil-DNA glycosylase (230 aa).

Aspartate 70 acts as the Proton acceptor in catalysis.

The protein belongs to the uracil-DNA glycosylase (UDG) superfamily. UNG family.

The protein resides in the cytoplasm. It carries out the reaction Hydrolyzes single-stranded DNA or mismatched double-stranded DNA and polynucleotides, releasing free uracil.. In terms of biological role, excises uracil residues from the DNA which can arise as a result of misincorporation of dUMP residues by DNA polymerase or due to deamination of cytosine. This Pseudomonas putida (strain W619) protein is Uracil-DNA glycosylase.